The sequence spans 500 residues: Pyoverdin chromophore biosynthetic protein PvcC (500 aa).

The cofactor is FAD.

Its pathway is siderophore biosynthesis; pyoverdin biosynthesis. The chain is Pyoverdin chromophore biosynthetic protein PvcC (pvcC) from Pseudomonas aeruginosa (strain ATCC 15692 / DSM 22644 / CIP 104116 / JCM 14847 / LMG 12228 / 1C / PRS 101 / PAO1).